A 339-amino-acid polypeptide reads, in one-letter code: Dihydroorotate dehydrogenase (quinone) (339 aa).

FMN-binding positions include 61–65 (AGLDK) and Thr85. Position 65 (Lys65) interacts with substrate. 110 to 114 (NRMGF) serves as a coordination point for substrate. Positions 138 and 171 each coordinate FMN. Asn171 is a substrate binding site. Residue Ser174 is the Nucleophile of the active site. A substrate-binding site is contributed by Asn176. FMN contacts are provided by Lys216 and Thr244. A substrate-binding site is contributed by 245–246 (NT). Residues Gly267, Gly296, and 317-318 (YS) each bind FMN.

It belongs to the dihydroorotate dehydrogenase family. Type 2 subfamily. As to quaternary structure, monomer. The cofactor is FMN.

Its subcellular location is the cell membrane. The catalysed reaction is (S)-dihydroorotate + a quinone = orotate + a quinol. Its pathway is pyrimidine metabolism; UMP biosynthesis via de novo pathway; orotate from (S)-dihydroorotate (quinone route): step 1/1. In terms of biological role, catalyzes the conversion of dihydroorotate to orotate with quinone as electron acceptor. The sequence is that of Dihydroorotate dehydrogenase (quinone) from Teredinibacter turnerae (strain ATCC 39867 / T7901).